We begin with the raw amino-acid sequence, 188 residues long: Crossover junction endodeoxyribonuclease RuvC (188 aa).

Active-site residues include Asp14, Glu74, and Asp149. 3 residues coordinate Mg(2+): Asp14, Glu74, and Asp149.

The protein belongs to the RuvC family. Homodimer which binds Holliday junction (HJ) DNA. The HJ becomes 2-fold symmetrical on binding to RuvC with unstacked arms; it has a different conformation from HJ DNA in complex with RuvA. In the full resolvosome a probable DNA-RuvA(4)-RuvB(12)-RuvC(2) complex forms which resolves the HJ. Mg(2+) serves as cofactor.

It localises to the cytoplasm. The catalysed reaction is Endonucleolytic cleavage at a junction such as a reciprocal single-stranded crossover between two homologous DNA duplexes (Holliday junction).. Its function is as follows. The RuvA-RuvB-RuvC complex processes Holliday junction (HJ) DNA during genetic recombination and DNA repair. Endonuclease that resolves HJ intermediates. Cleaves cruciform DNA by making single-stranded nicks across the HJ at symmetrical positions within the homologous arms, yielding a 5'-phosphate and a 3'-hydroxyl group; requires a central core of homology in the junction. The consensus cleavage sequence is 5'-(A/T)TT(C/G)-3'. Cleavage occurs on the 3'-side of the TT dinucleotide at the point of strand exchange. HJ branch migration catalyzed by RuvA-RuvB allows RuvC to scan DNA until it finds its consensus sequence, where it cleaves and resolves the cruciform DNA. This is Crossover junction endodeoxyribonuclease RuvC from Bacteroides fragilis (strain ATCC 25285 / DSM 2151 / CCUG 4856 / JCM 11019 / LMG 10263 / NCTC 9343 / Onslow / VPI 2553 / EN-2).